The primary structure comprises 419 residues: Putative zinc metalloprotease spr0242 (419 aa).

Zn(2+) is bound at residue H18. Residue E19 is part of the active site. H22 contributes to the Zn(2+) binding site. The next 3 membrane-spanning stretches (helical) occupy residues 169-191, 345-367, and 388-410; these read LITN…WVLI, ILYF…IPAL, and EIET…AVTW.

The protein belongs to the peptidase M50B family. It depends on Zn(2+) as a cofactor.

The protein resides in the cell membrane. In Streptococcus pneumoniae (strain ATCC BAA-255 / R6), this protein is Putative zinc metalloprotease spr0242.